The primary structure comprises 1395 residues: DNA-directed RNA polymerase subunit beta' (1395 aa).

The Zn(2+) site is built by C70, C72, C85, and C88. D460, D462, and D464 together coordinate Mg(2+). Zn(2+)-binding residues include C814, C888, C895, and C898.

Belongs to the RNA polymerase beta' chain family. As to quaternary structure, the RNAP catalytic core consists of 2 alpha, 1 beta, 1 beta' and 1 omega subunit. When a sigma factor is associated with the core the holoenzyme is formed, which can initiate transcription. Mg(2+) is required as a cofactor. It depends on Zn(2+) as a cofactor.

It carries out the reaction RNA(n) + a ribonucleoside 5'-triphosphate = RNA(n+1) + diphosphate. Its function is as follows. DNA-dependent RNA polymerase catalyzes the transcription of DNA into RNA using the four ribonucleoside triphosphates as substrates. The chain is DNA-directed RNA polymerase subunit beta' from Pseudoalteromonas atlantica (strain T6c / ATCC BAA-1087).